The sequence spans 101 residues: Small ribosomal subunit protein uS14 (101 aa).

It belongs to the universal ribosomal protein uS14 family. As to quaternary structure, part of the 30S ribosomal subunit. Contacts proteins S3 and S10.

Its function is as follows. Binds 16S rRNA, required for the assembly of 30S particles and may also be responsible for determining the conformation of the 16S rRNA at the A site. This Chlamydia muridarum (strain MoPn / Nigg) protein is Small ribosomal subunit protein uS14.